The chain runs to 160 residues: Putative NrdI-like protein (160 aa).

It belongs to the NrdI family.

This Streptococcus pyogenes serotype M3 (strain ATCC BAA-595 / MGAS315) protein is Putative NrdI-like protein.